Here is a 419-residue protein sequence, read N- to C-terminus: Creatine kinase S-type, mitochondrial (419 aa).

A mitochondrion-targeting transit peptide spans 1-39 (MAGTFGRLLAGRVTAALFAAAGSGVLTTGYLLNQQNVKA). Positions 46-132 (KLFPPSADYP…FDPVIKARHN (87 aa)) constitute a Phosphagen kinase N-terminal domain. The Phosphagen kinase C-terminal domain maps to 159–401 (YVLSSRVRTG…NYLVDCEKKL (243 aa)). ATP contacts are provided by residues 162-166 (SSRVR), His225, Arg270, Arg326, 354-359 (RGTGGV), and Asp369.

The protein belongs to the ATP:guanido phosphotransferase family. Exists as an octamer composed of four MTCK homodimers. In terms of tissue distribution, expressed in the leg muscle and heart.

The protein localises to the mitochondrion inner membrane. The enzyme catalyses creatine + ATP = N-phosphocreatine + ADP + H(+). In terms of biological role, reversibly catalyzes the transfer of phosphate between ATP and various phosphogens (e.g. creatine phosphate). Creatine kinase isoenzymes play a central role in energy transduction in tissues with large, fluctuating energy demands, such as skeletal muscle, heart, brain and spermatozoa. The polypeptide is Creatine kinase S-type, mitochondrial (CKMT2) (Gallus gallus (Chicken)).